The following is a 390-amino-acid chain: Telobox protein 1 (390 aa).

The interval 30-57 (ENPSKREVAQDVPGFERKPTKVRKPRVK) is disordered. Over residues 32–48 (PSKREVAQDVPGFERKP) the composition is skewed to basic and acidic residues. HTH myb-type domains lie at 50–109 (KVRK…PEDY) and 135–193 (STRK…PERY). Positions 78 to 105 (WKKILLDERFHFTNRSPNDLKDRFRTIL) form a DNA-binding region, H-T-H motif. Positions 115 to 143 (NAKTHMGRPQKIPHTVGLSKSTRKERKQF) are disordered. A DNA-binding region (H-T-H motif) is located at residues 162–189 (WTRISKDANLGLQNRRSTDLRDRFRNAF). 2 stretches are compositionally biased toward polar residues: residues 244-257 (SNPN…TEQP) and 322-340 (ISPS…SIQQ). Disordered stretches follow at residues 244–278 (SNPN…FTSQ) and 316–390 (QPPS…DNRG). Residues 347 to 360 (PPLSSNTLNSSTLP) are compositionally biased toward low complexity.

The protein resides in the nucleus. General transcription factor with prominent roles in controlling histone levels and stability. Binds and regulates the activities of many promoters, including those controlling the expression of all four types of canonical histones. Is also involved in the centromeric loading of cnp1 and maintenance of centromere identity. Moreover, regulates the expression of cdc2, a protease capable of histone clipping. This is Telobox protein 1 from Schizosaccharomyces pombe (strain 972 / ATCC 24843) (Fission yeast).